A 58-amino-acid polypeptide reads, in one-letter code: Small ribosomal subunit protein bS21 (58 aa).

Basic and acidic residues predominate over residues 32-42; it reads IRKREHYEKPS. The disordered stretch occupies residues 32–58; it reads IRKREHYEKPSVRRKKKSEAARKRKFN. Residues 43–58 are compositionally biased toward basic residues; the sequence is VRRKKKSEAARKRKFN.

The protein belongs to the bacterial ribosomal protein bS21 family.

The sequence is that of Small ribosomal subunit protein bS21 from Lachnospira eligens (strain ATCC 27750 / DSM 3376 / VPI C15-48 / C15-B4) (Eubacterium eligens).